The primary structure comprises 597 residues: Elongation factor 4 (597 aa).

In terms of domain architecture, tr-type G spans 4–181 (SKIRNFSIIA…EIVDKISYPI (178 aa)). Residues 16–21 (DHGKST) and 128–131 (NKID) each bind GTP.

It belongs to the TRAFAC class translation factor GTPase superfamily. Classic translation factor GTPase family. LepA subfamily.

The protein resides in the cell membrane. The catalysed reaction is GTP + H2O = GDP + phosphate + H(+). Its function is as follows. Required for accurate and efficient protein synthesis under certain stress conditions. May act as a fidelity factor of the translation reaction, by catalyzing a one-codon backward translocation of tRNAs on improperly translocated ribosomes. Back-translocation proceeds from a post-translocation (POST) complex to a pre-translocation (PRE) complex, thus giving elongation factor G a second chance to translocate the tRNAs correctly. Binds to ribosomes in a GTP-dependent manner. The polypeptide is Elongation factor 4 (Mycoplasmopsis pulmonis (strain UAB CTIP) (Mycoplasma pulmonis)).